Reading from the N-terminus, the 150-residue chain is D-aminoacyl-tRNA deacylase (150 aa).

A Gly-cisPro motif, important for rejection of L-amino acids motif is present at residues 138 to 139 (GP).

The protein belongs to the DTD family. As to quaternary structure, homodimer.

Its subcellular location is the cytoplasm. The enzyme catalyses glycyl-tRNA(Ala) + H2O = tRNA(Ala) + glycine + H(+). It carries out the reaction a D-aminoacyl-tRNA + H2O = a tRNA + a D-alpha-amino acid + H(+). Functionally, an aminoacyl-tRNA editing enzyme that deacylates mischarged D-aminoacyl-tRNAs. Also deacylates mischarged glycyl-tRNA(Ala), protecting cells against glycine mischarging by AlaRS. Acts via tRNA-based rather than protein-based catalysis; rejects L-amino acids rather than detecting D-amino acids in the active site. By recycling D-aminoacyl-tRNA to D-amino acids and free tRNA molecules, this enzyme counteracts the toxicity associated with the formation of D-aminoacyl-tRNA entities in vivo and helps enforce protein L-homochirality. In Natranaerobius thermophilus (strain ATCC BAA-1301 / DSM 18059 / JW/NM-WN-LF), this protein is D-aminoacyl-tRNA deacylase.